A 1035-amino-acid polypeptide reads, in one-letter code: Sulfite reductase [NADPH] flavoprotein component (1035 aa).

The 232-residue stretch at 648–879 folds into the FAD-binding FR-type domain; the sequence is VKNFVVKVKE…VKPSVMKLPP (232 aa). FAD is bound by residues 684–695 and 814–824; these read YDIGEALGIHAR and LKRREYSIASS.

It depends on FAD as a cofactor. FMN serves as cofactor.

It catalyses the reaction hydrogen sulfide + 3 NADP(+) + 3 H2O = sulfite + 3 NADPH + 4 H(+). The protein operates within sulfur metabolism; hydrogen sulfide biosynthesis; hydrogen sulfide from sulfite (NADPH route): step 1/1. In terms of biological role, this enzyme catalyzes the 6-electron reduction of sulfite to sulfide. This is one of several activities required for the biosynthesis of L-cysteine from sulfate. The polypeptide is Sulfite reductase [NADPH] flavoprotein component (MET10) (Saccharomyces cerevisiae (strain ATCC 204508 / S288c) (Baker's yeast)).